Reading from the N-terminus, the 285-residue chain is 1-deoxypentalenic acid 11-beta-hydroxylase (285 aa).

Arg117 lines the substrate pocket. Fe cation-binding residues include His137 and Asp139. 2-oxoglutarate contacts are provided by residues 137-139 (HQD) and Trp153. Arg188 lines the substrate pocket. Residue His226 participates in Fe cation binding. Residues Ser228 and Arg240 each coordinate 2-oxoglutarate.

This sequence belongs to the PhyH family. Fe cation serves as cofactor. The cofactor is L-ascorbate.

The catalysed reaction is 1-deoxypentalenate + 2-oxoglutarate + O2 = 1-deoxy-11beta-hydroxypentalenate + succinate + CO2. It functions in the pathway antibiotic biosynthesis; neopentalenolactone biosynthesis. Catalyzes the conversion of 1-deoxypentalenic acid to 11-beta-hydroxy-1-deoxypentalenic acid in the biosynthesis of neopentalenolactone antibiotic. The sequence is that of 1-deoxypentalenic acid 11-beta-hydroxylase (ptlH) from Streptomyces avermitilis (strain ATCC 31267 / DSM 46492 / JCM 5070 / NBRC 14893 / NCIMB 12804 / NRRL 8165 / MA-4680).